An 879-amino-acid polypeptide reads, in one-letter code: Phosphoenolpyruvate carboxylase (879 aa).

Residues His138 and Lys545 contribute to the active site.

The protein belongs to the PEPCase type 1 family. Requires Mg(2+) as cofactor.

The catalysed reaction is oxaloacetate + phosphate = phosphoenolpyruvate + hydrogencarbonate. Functionally, forms oxaloacetate, a four-carbon dicarboxylic acid source for the tricarboxylic acid cycle. This is Phosphoenolpyruvate carboxylase from Haemophilus influenzae (strain 86-028NP).